Here is a 376-residue protein sequence, read N- to C-terminus: Hydroxylysine kinase (376 aa).

Catalysis depends on Asp229, which acts as the Proton acceptor.

This sequence belongs to the aminoglycoside phosphotransferase family.

The protein localises to the cytoplasm. The enzyme catalyses (5R)-5-hydroxy-L-lysine + GTP = (5R)-5-phosphooxy-L-lysine + GDP + H(+). Catalyzes the GTP-dependent phosphorylation of 5-hydroxy-L-lysine. The protein is Hydroxylysine kinase (HYKK) of Bos taurus (Bovine).